Consider the following 184-residue polypeptide: ATP-dependent protease subunit HslV (184 aa).

T12 is a catalytic residue. The Na(+) site is built by A166, C169, and T172.

This sequence belongs to the peptidase T1B family. HslV subfamily. In terms of assembly, a double ring-shaped homohexamer of HslV is capped on each side by a ring-shaped HslU homohexamer. The assembly of the HslU/HslV complex is dependent on binding of ATP.

The protein resides in the cytoplasm. It catalyses the reaction ATP-dependent cleavage of peptide bonds with broad specificity.. With respect to regulation, allosterically activated by HslU binding. In terms of biological role, protease subunit of a proteasome-like degradation complex believed to be a general protein degrading machinery. In Nitrobacter hamburgensis (strain DSM 10229 / NCIMB 13809 / X14), this protein is ATP-dependent protease subunit HslV.